The following is a 349-amino-acid chain: Sterol-4-alpha-carboxylate 3-dehydrogenase ERG26, decarboxylating (349 aa).

NADP(+) contacts are provided by residues 11-17 (GGSGFLG), 62-63 (DL), and 84-86 (CAS). Substrate contacts are provided by serine 124 and tyrosine 151. Residues tyrosine 151, lysine 155, and 179–182 (PAGI) contribute to the NADP(+) site. Lysine 155 functions as the Proton donor in the catalytic mechanism.

This sequence belongs to the 3-beta-HSD family. As to quaternary structure, heterotetramer of ERG25, ERG26, ERG27 and ERG28. ERG28 acts as a scaffold to tether ERG27 and other 4,4-demethylation-related enzymes, forming a demethylation enzyme complex, in the endoplasmic reticulum.

The protein localises to the endoplasmic reticulum membrane. The catalysed reaction is 4beta-methylzymosterol-4alpha-carboxylate + NADP(+) = 3-dehydro-4-methylzymosterol + CO2 + NADPH. The protein operates within steroid biosynthesis; zymosterol biosynthesis; zymosterol from lanosterol: step 4/6. Its activity is regulated as follows. Inhibited by FR171456, a natural product with broad antifungal activity. In terms of biological role, sterol-4-alpha-carboxylate 3-dehydrogenase; part of the third module of ergosterol biosynthesis pathway that includes the late steps of the pathway. ERG26 is a catalytic component of the C-4 demethylation complex that catalyzes the oxidative decarboxylation that results in a reduction of the 3-beta-hydroxy group at the C-3 carbon to an oxo group. The third module or late pathway involves the ergosterol synthesis itself through consecutive reactions that mainly occur in the endoplasmic reticulum (ER) membrane. Firstly, the squalene synthase ERG9 catalyzes the condensation of 2 farnesyl pyrophosphate moieties to form squalene, which is the precursor of all steroids. Squalene synthase is crucial for balancing the incorporation of farnesyl diphosphate (FPP) into sterol and nonsterol isoprene synthesis. Secondly, the squalene epoxidase ERG1 catalyzes the stereospecific oxidation of squalene to (S)-2,3-epoxysqualene, which is considered to be a rate-limiting enzyme in steroid biosynthesis. Then, the lanosterol synthase ERG7 catalyzes the cyclization of (S)-2,3 oxidosqualene to lanosterol, a reaction that forms the sterol core. In the next steps, lanosterol is transformed to zymosterol through a complex process involving various demethylation, reduction and desaturation reactions. The lanosterol 14-alpha-demethylase ERG11 (also known as CYP51) catalyzes C14-demethylation of lanosterol to produce 4,4'-dimethyl cholesta-8,14,24-triene-3-beta-ol, which is critical for ergosterol biosynthesis. The C-14 reductase ERG24 reduces the C14=C15 double bond of 4,4-dimethyl-cholesta-8,14,24-trienol to produce 4,4-dimethyl-cholesta-8,24-dienol. 4,4-dimethyl-cholesta-8,24-dienol is substrate of the C-4 demethylation complex ERG25-ERG26-ERG27 in which ERG25 catalyzes the three-step monooxygenation required for the demethylation of 4,4-dimethyl and 4alpha-methylsterols, ERG26 catalyzes the oxidative decarboxylation that results in a reduction of the 3-beta-hydroxy group at the C-3 carbon to an oxo group, and ERG27 is responsible for the reduction of the keto group on the C-3. ERG28 has a role as a scaffold to help anchor ERG25, ERG26 and ERG27 to the endoplasmic reticulum and ERG29 regulates the activity of the iron-containing C4-methylsterol oxidase ERG25. Then, the sterol 24-C-methyltransferase ERG6 catalyzes the methyl transfer from S-adenosyl-methionine to the C-24 of zymosterol to form fecosterol. The C-8 sterol isomerase ERG2 catalyzes the reaction which results in unsaturation at C-7 in the B ring of sterols and thus converts fecosterol to episterol. The sterol-C5-desaturase ERG3 then catalyzes the introduction of a C-5 double bond in the B ring to produce 5-dehydroepisterol. The C-22 sterol desaturase ERG5 further converts 5-dehydroepisterol into ergosta-5,7,22,24(28)-tetraen-3beta-ol by forming the C-22(23) double bond in the sterol side chain. Finally, ergosta-5,7,22,24(28)-tetraen-3beta-ol is substrate of the C-24(28) sterol reductase ERG4 to produce ergosterol. This Saccharomyces cerevisiae (strain ATCC 204508 / S288c) (Baker's yeast) protein is Sterol-4-alpha-carboxylate 3-dehydrogenase ERG26, decarboxylating.